The chain runs to 336 residues: Glycerol-3-phosphate dehydrogenase [NAD(P)+] (336 aa).

The NADPH site is built by S11, W12, R32, R33, and K110. Positions 110 and 140 each coordinate sn-glycerol 3-phosphate. Position 144 (A144) interacts with NADPH. Sn-glycerol 3-phosphate-binding residues include K195, D248, S258, R259, and N260. The active-site Proton acceptor is K195. Residue R259 participates in NADPH binding. 2 residues coordinate NADPH: V284 and E286.

The protein belongs to the NAD-dependent glycerol-3-phosphate dehydrogenase family.

The protein localises to the cytoplasm. The catalysed reaction is sn-glycerol 3-phosphate + NAD(+) = dihydroxyacetone phosphate + NADH + H(+). It catalyses the reaction sn-glycerol 3-phosphate + NADP(+) = dihydroxyacetone phosphate + NADPH + H(+). It participates in membrane lipid metabolism; glycerophospholipid metabolism. In terms of biological role, catalyzes the reduction of the glycolytic intermediate dihydroxyacetone phosphate (DHAP) to sn-glycerol 3-phosphate (G3P), the key precursor for phospholipid synthesis. The sequence is that of Glycerol-3-phosphate dehydrogenase [NAD(P)+] from Nocardia farcinica (strain IFM 10152).